Consider the following 276-residue polypeptide: Putative serine/threonine-protein kinase R436 (276 aa).

The 261-residue stretch at 6–266 (YSLDKLIQNR…IKQKLNHFKT (261 aa)) folds into the Protein kinase domain. Residues 12 to 20 (IQNRKSKRI) and lysine 35 contribute to the ATP site. The active-site Proton acceptor is aspartate 132.

The protein belongs to the protein kinase superfamily. Ser/Thr protein kinase family.

It carries out the reaction L-seryl-[protein] + ATP = O-phospho-L-seryl-[protein] + ADP + H(+). It catalyses the reaction L-threonyl-[protein] + ATP = O-phospho-L-threonyl-[protein] + ADP + H(+). This chain is Putative serine/threonine-protein kinase R436, found in Acanthamoeba polyphaga (Amoeba).